Consider the following 405-residue polypeptide: Tryptophan synthase beta chain (405 aa).

K86 is modified (N6-(pyridoxal phosphate)lysine).

Belongs to the TrpB family. As to quaternary structure, tetramer of two alpha and two beta chains. The cofactor is pyridoxal 5'-phosphate.

The enzyme catalyses (1S,2R)-1-C-(indol-3-yl)glycerol 3-phosphate + L-serine = D-glyceraldehyde 3-phosphate + L-tryptophan + H2O. It functions in the pathway amino-acid biosynthesis; L-tryptophan biosynthesis; L-tryptophan from chorismate: step 5/5. In terms of biological role, the beta subunit is responsible for the synthesis of L-tryptophan from indole and L-serine. The chain is Tryptophan synthase beta chain from Shewanella piezotolerans (strain WP3 / JCM 13877).